Reading from the N-terminus, the 310-residue chain is Alpha/beta hydrolase domain-containing protein 17A (310 aa).

The tract at residues 38–61 (VPEPEPGPGGAGAAPSGPLRTSAA) is disordered. Active-site charge relay system residues include Ser190, Asp255, and His284. Ser307 carries the phosphoserine modification.

It belongs to the AB hydrolase superfamily. ABHD17 family. Palmitoylated on cysteine residues located in a cysteine cluster at the N-terminus which promotes membrane localization. Palmitoylation is required for post-synaptic localization and for depalmitoylating activity towards DLG4/PSD95.

Its subcellular location is the cell membrane. It localises to the endosome membrane. The protein localises to the cell projection. The protein resides in the dendritic spine. It is found in the postsynaptic density membrane. The catalysed reaction is S-hexadecanoyl-L-cysteinyl-[protein] + H2O = L-cysteinyl-[protein] + hexadecanoate + H(+). Its function is as follows. Hydrolyzes fatty acids from S-acylated cysteine residues in proteins. Has depalmitoylating activity towards NRAS. Has depalmitoylating activity towards DLG4/PSD95. May have depalmitoylating activity towars MAP6. The polypeptide is Alpha/beta hydrolase domain-containing protein 17A (Mus musculus (Mouse)).